The primary structure comprises 746 residues: Exocyst complex component 3-like protein (746 aa).

The disordered stretch occupies residues 1–23; it reads MDSAAKDEMQPALSPGPEWPEQE. Residues 1–370 are mediates interaction with EXOC2, EXOC4 and EXOC5; sequence MDSAAKDEMQ…DVSQLEPLLT (370 aa).

This sequence belongs to the SEC6 family. As to quaternary structure, interacts with EXOC2, EXOC4 and EXOC5; may be part of the exocyst.

It localises to the cytoplasmic vesicle. It is found in the secretory vesicle. Its function is as follows. As part of the exocyst, may play a role in regulated exocytosis of insulin granules. In Homo sapiens (Human), this protein is Exocyst complex component 3-like protein (EXOC3L1).